The sequence spans 777 residues: Protein argonaute (777 aa).

The tract at residues 1 to 107 (MAPVQAADEM…ARLDDALEEA (107 aa)) is N-terminal domain. Positions 108 to 182 (LPKYAAVKKR…TIGMRYDIEA (75 aa)) are linker L1. The segment at 183-243 (SLRDLLEAGI…VNVNDAKLEG (61 aa)) is PAZ domain. The interval 244–341 (SKENFTRCLS…DRTGAKSAEY (98 aa)) is linker L2. The interval 342 to 509 (AWRGLSQFGP…SIATYAKLNG (168 aa)) is mid domain. In terms of domain architecture, Piwi spans 445–757 (GIVVLFEDHA…IAELLGRLKS (313 aa)). Residues 510-777 (TPWTVNHDKA…IKLKWSRWFL (268 aa)) form a PIWI domain region. L777 provides a ligand contact to Mg(2+).

It belongs to the argonaute family. Long pAgo subfamily. Mg(2+) serves as cofactor.

Functionally, a catalytically inactive argonaute protein. Binds 5'-phosphorylated RNA as the guide (gRNA) and short DNA as target DNA (tDNA); does not bind other nucleic acid combinations, does not bind tDNA alone. Has highest affinity for gRNA that begins with 5'-phospho-U and poor affinity for gRNA with 5'-OH. Upon expression in E.coli, plasmid sequences are found in RsAgo, its induction leads to plasmid degradation and suppression of genes encoded on foreign plasmids, suggesting it may also interfere with transcription. Does not interact with preformed gRNA:tDNA duplexes. Mismatches and nt bulges are tolerated in the ternary complex, however, they significantly reduce the affinity of RsAgo:gRNA for tDNA. Mismatched tDNA can cause dissociation of gRNA from RsAgo. In situ binds 2 populations of RNA (15-19 and 45 nucleotides, nt) and a population of ssDNA 22-24 nt in length. The small sense RNA is probably derived from mRNA degradation and strongly enriched for U in the first and U/C in the second positions. The small DNA is enriched for sequences complementary to the RNA, with 3 nt overhangs on both ends; another nuclease may trim the ends. The sequences are largely derived from exogenous plasmids or genome-encoded foreign elements such as prophages and transposons. Forms a ternary complex with gRNA and double-stranded tDNA only when the tDNA is open. This chain is Protein argonaute, found in Cereibacter sphaeroides (strain ATCC 17025 / ATH 2.4.3) (Rhodobacter sphaeroides).